Reading from the N-terminus, the 475-residue chain is Phosphoglucosamine mutase (475 aa).

Catalysis depends on Ser126, which acts as the Phosphoserine intermediate. Mg(2+)-binding residues include Ser126, Asp265, Asp267, and Asp269. The residue at position 126 (Ser126) is a Phosphoserine.

Belongs to the phosphohexose mutase family. Mg(2+) is required as a cofactor. Post-translationally, activated by phosphorylation.

The catalysed reaction is alpha-D-glucosamine 1-phosphate = D-glucosamine 6-phosphate. Catalyzes the conversion of glucosamine-6-phosphate to glucosamine-1-phosphate. The polypeptide is Phosphoglucosamine mutase (Synechococcus sp. (strain ATCC 27144 / PCC 6301 / SAUG 1402/1) (Anacystis nidulans)).